The primary structure comprises 259 residues: MASQLRLRSALALVTGAGSGIGRAISVRLAAEGAAVAACDLDGAAAQDTVRLLGSPGSEDGAPRGKHAAFQADVSQGPAARRLLEEVQACFSRPPSVVVSCAGITRDEFLLHMSEEDWDRVIAVNLKGTFLVTQAAAQALVSSGGRGSIINISSIIGKVGNIGQTNYASSKAGVIGLTQTAARELGRHGIRCNSVLPGFIATPMTQKMPEKVKDKVTAMIPLGHMGDPEDVADVVAFLASEDSGYITGASVEVSGGLFM.

Residues leucine 13–isoleucine 21 and aspartate 40–leucine 41 each bind NAD(+). Serine 58 carries the phosphoserine modification. Lysine 66 carries the N6-acetyllysine modification. Residue alanine 72–valine 74 participates in NAD(+) binding. Serine 154 lines the substrate pocket. Lysine 158 bears the N6-succinyllysine mark. Tyrosine 167 acts as the Proton acceptor in catalysis. NAD(+) is bound by residues tyrosine 167–lysine 171 and isoleucine 200–threonine 202. Lysine 171 carries the N6-succinyllysine modification.

Belongs to the short-chain dehydrogenases/reductases (SDR) family. As to quaternary structure, heterotetramer with CBR4; contains two molecules of HSD17B8 and CBR4. In terms of tissue distribution, kidney, liver, testis, ovary and spleen. Oviduct, uterus, mammary gland, vagina, prostate, clitoral gland and moderately heart, dorsal skin, brain and lung.

The protein localises to the mitochondrion matrix. The catalysed reaction is a (3R)-3-hydroxyacyl-CoA + NAD(+) = a 3-oxoacyl-CoA + NADH + H(+). It carries out the reaction 17beta-estradiol + NAD(+) = estrone + NADH + H(+). It catalyses the reaction testosterone + NAD(+) = androst-4-ene-3,17-dione + NADH + H(+). The enzyme catalyses 17beta-hydroxy-5alpha-androstan-3-one + NAD(+) = 5alpha-androstan-3,17-dione + NADH + H(+). Its pathway is lipid metabolism; fatty acid biosynthesis. The protein operates within steroid biosynthesis; estrogen biosynthesis. It functions in the pathway lipid metabolism; mitochondrial fatty acid beta-oxidation. Its function is as follows. Required for the solubility and assembly of the heterotetramer 3-ketoacyl-[acyl carrier protein] (ACP) reductase functional complex (KAR or KAR1) that forms part of the mitochondrial fatty acid synthase (mtFAS). Alpha-subunit of the KAR complex, acts as scaffold protein, required for the stability of carbonyl reductase type-4 (CBR4, beta-subunit of the KAR complex) and for its 3-ketoacyl-ACP reductase activity, thereby participating in mitochondrial fatty acid biosynthesis. Catalyzes the NAD-dependent conversion of (3R)-3-hydroxyacyl-CoA into 3-ketoacyl-CoA (3-oxoacyl-CoA) with no chain length preference, this enzymatic activity is not needed for the KAR function. Prefers (3R)-3-hydroxyacyl-CoA over (3S)-3-hydroxyacyl-CoA and displays enzymatic activity only in the presence of NAD(+)(H). Cooperates with enoyl-CoA hydratase 1 in mitochondria, together they constitute an alternative route to the auxiliary enzyme pathways for the breakdown of Z-PUFA (cis polyunsaturated fatty acid) enoyl-esters. NAD-dependent 17-beta-hydroxysteroid dehydrogenase with highest activity towards estradiol. It efficiently catalyzes the oxidation of estradiol (E2), testosterone, and dihydrotestosterone. Primarily an oxidative enzyme, it can switch to a reductive mode determined in the appropriate physiologic milieu and catalyze the reduction of estrone (E1) to form biologically active estradiol (E2). This chain is (3R)-3-hydroxyacyl-CoA dehydrogenase (Hsd17b8), found in Mus musculus (Mouse).